The primary structure comprises 248 residues: Ribonuclease 3 (248 aa).

Residues 16 to 145 form the RNase III domain; it reads TEGLETSIGY…LLAAMYLDGG (130 aa). Residue Glu-58 coordinates Mg(2+). Asp-62 is an active-site residue. Positions 131 and 134 each coordinate Mg(2+). Glu-134 is an active-site residue. In terms of domain architecture, DRBM spans 172–241; sequence DFKTDFQELA…ARQCLERLET (70 aa).

Belongs to the ribonuclease III family. In terms of assembly, homodimer. Mg(2+) serves as cofactor.

It localises to the cytoplasm. It carries out the reaction Endonucleolytic cleavage to 5'-phosphomonoester.. In terms of biological role, digests double-stranded RNA. Involved in the processing of primary rRNA transcript to yield the immediate precursors to the large and small rRNAs (23S and 16S). Processes some mRNAs, and tRNAs when they are encoded in the rRNA operon. Processes pre-crRNA and tracrRNA of type II CRISPR loci if present in the organism. This Geobacter sulfurreducens (strain ATCC 51573 / DSM 12127 / PCA) protein is Ribonuclease 3.